The chain runs to 264 residues: Anamorsin homolog 2 (264 aa).

The interval 1 to 142 (MAATAAALAV…KVSWSMGSSF (142 aa)) is N-terminal SAM-like domain. Positions 143–174 (PLKKATKGLPKIQIDDDSELIDEDSLLTEDDL) are linker. [2Fe-2S] cluster contacts are provided by Cys185, Cys194, Cys197, and Cys199. The interval 185 to 199 (CEVGATRKACKNCTC) is fe-S binding site A. Residues Cys225, Cys228, Cys236, and Cys239 each contribute to the [4Fe-4S] cluster site. 2 short sequence motifs (cx2C motif) span residues 225–228 (CGNC) and 236–239 (CGTC). Residues 225–239 (CGNCGLGDAFRCGTC) are fe-S binding site B.

The protein belongs to the anamorsin family. In terms of assembly, monomer. [2Fe-2S] cluster is required as a cofactor. [4Fe-4S] cluster serves as cofactor.

The protein localises to the cytoplasm. The protein resides in the mitochondrion intermembrane space. In terms of biological role, component of the cytosolic iron-sulfur (Fe-S) protein assembly (CIA) machinery. Required for the maturation of extramitochondrial Fe-S proteins. Part of an electron transfer chain functioning in an early step of cytosolic Fe-S biogenesis, facilitating the de novo assembly of a [4Fe-4S] cluster on the cytosolic Fe-S scaffold complex. Electrons are transferred from NADPH via a FAD- and FMN-containing diflavin oxidoreductase. Together with the diflavin oxidoreductase, also required for the assembly of the diferric tyrosyl radical cofactor of ribonucleotide reductase (RNR), probably by providing electrons for reduction during radical cofactor maturation in the catalytic small subunit. This Oryza sativa subsp. japonica (Rice) protein is Anamorsin homolog 2.